The primary structure comprises 364 residues: DNA replication and repair protein RecF (364 aa).

30-37 serves as a coordination point for ATP; the sequence is GNNAQGKT.

Belongs to the RecF family.

It is found in the cytoplasm. Its function is as follows. The RecF protein is involved in DNA metabolism; it is required for DNA replication and normal SOS inducibility. RecF binds preferentially to single-stranded, linear DNA. It also seems to bind ATP. This chain is DNA replication and repair protein RecF, found in Clostridium botulinum (strain Loch Maree / Type A3).